The following is a 60-amino-acid chain: Putative mercuric resistance protein (60 aa).

This Pseudomonas aeruginosa protein is Putative mercuric resistance protein.